The sequence spans 312 residues: GATA transcription factor 6 (312 aa).

3 disordered regions span residues 1–33 (MESVELTLKNSNMKDKTLTGGAQNGDDFSVDDL), 56–77 (QRKRGVSDENTLHRSNDFSTAD), and 136–186 (KSQH…PLWL). The span at 56-71 (QRKRGVSDENTLHRSN) shows a compositional bias: basic and acidic residues. Positions 142 to 151 (VKTRPKRART) are enriched in basic residues. Residues 143-150 (KTRPKRAR) carry the Nuclear localization signal motif. Over residues 157–186 (SHGSQSLTDSSSSSTTSSSSSPRPSSPLWL) the composition is skewed to low complexity. The GATA-type zinc finger occupies 217–271 (QTQTRQCGHCGVQKTPQWRAGPLGAKTLCNACGVRYKSGRLLPEYRPACSPTFSS).

The protein belongs to the type IV zinc-finger family. Class A subfamily.

The protein localises to the nucleus. Its function is as follows. Transcriptional activator that specifically binds 5'-GATA-3' or 5'-GAT-3' motifs within gene promoters. May be involved in the regulation of some light-responsive genes. This is GATA transcription factor 6 (GATA6) from Arabidopsis thaliana (Mouse-ear cress).